A 268-amino-acid polypeptide reads, in one-letter code: Zinc finger protein SNAI2 (268 aa).

The SNAG domain stretch occupies residues 1–20 (MPRSFLVKKHFNASKKPNYS). Residues 80–117 (PASLGRVSPPPPSDTSSKDHSGSESPISDEEERLQSKL) form a disordered region. C2H2-type zinc fingers lie at residues 128–150 (FQCN…KQLH), 159–181 (FSCK…IRTH), 185–207 (CVCK…IRTH), and 213–235 (FSCS…LQTH). A C2H2-type 5; atypical zinc finger spans residues 241 to 264 (YQCKSCSKTFSRMSLLHKHEESGC).

The protein belongs to the snail C2H2-type zinc-finger protein family. Interacts (via SNAG domain) with LIMD1 (via LIM domains), WTIP (via LIM domains) and AJUBA (via LIM domains). Interacts (via zinc fingers) with KPNA2, KPNB1, and TNPO1. May interact (via zinc fingers) with IPO7. In terms of processing, phosphorylated by GSK3B. Once phosphorylated, it becomes a target for ubiquitination. Ubiquitinated by the SCF(FBXO11) complex; ubiquitination requires previous GSK3B-mediated SNAI2 phosphorylation.

Its subcellular location is the nucleus. It is found in the cytoplasm. Its function is as follows. Transcriptional repressor that modulates both activator-dependent and basal transcription. Involved in the generation and migration of neural crest cells. Plays a role in mediating RAF1-induced transcriptional repression of the TJ protein, occludin (OCLN) and subsequent oncogenic transformation of epithelial cells. Represses BRCA2 expression by binding to its E2-box-containing silencer and recruiting CTBP1 and HDAC1 in breast cells. In epidermal keratinocytes, binds to the E-box in ITGA3 promoter and represses its transcription. Involved in the regulation of ITGB1 and ITGB4 expression and cell adhesion and proliferation in epidermal keratinocytes. Binds to E-box2 domain of BSG and activates its expression during TGFB1-induced epithelial-mesenchymal transition (EMT) in hepatocytes. Represses E-Cadherin/CDH1 transcription via E-box elements. Involved in osteoblast maturation. Binds to RUNX2 and SOC9 promoters and may act as a positive and negative transcription regulator, respectively, in osteoblasts. Binds to CXCL12 promoter via E-box regions in mesenchymal stem cells and osteoblasts. Plays an essential role in TWIST1-induced EMT and its ability to promote invasion and metastasis. The chain is Zinc finger protein SNAI2 (SNAI2) from Bos taurus (Bovine).